A 193-amino-acid chain; its full sequence is Spermatogenesis-associated protein 3 (193 aa).

Residues 1 to 16 are compositionally biased toward basic residues; sequence MKKVKKKKSDSRRRRN. The segment at 1-92 is disordered; that stretch reads MKKVKKKKSD…SPFLVPMEPK (92 aa). A compositionally biased stretch (low complexity) spans 17 to 35; sequence SISPQTSSDSSQQPSSETP. The segment covering 36–48 has biased composition (pro residues); it reads PSCPEPASPPSKP.

Strongly expressed in testis. Faintly expressed in epididymis, ovary, spleen, kidney, lung, heart, brain, epididymis, liver and skeletal muscle.

The protein localises to the cell projection. It localises to the cilium. The protein resides in the flagellum. In Mus musculus (Mouse), this protein is Spermatogenesis-associated protein 3 (Spata3).